The following is a 147-amino-acid chain: Peptide deformylase (147 aa).

Cys-88 and His-130 together coordinate Fe cation. Glu-131 is a catalytic residue. Position 134 (His-134) interacts with Fe cation.

This sequence belongs to the polypeptide deformylase family. Fe(2+) serves as cofactor.

The catalysed reaction is N-terminal N-formyl-L-methionyl-[peptide] + H2O = N-terminal L-methionyl-[peptide] + formate. In terms of biological role, removes the formyl group from the N-terminal Met of newly synthesized proteins. Requires at least a dipeptide for an efficient rate of reaction. N-terminal L-methionine is a prerequisite for activity but the enzyme has broad specificity at other positions. This Alkaliphilus metalliredigens (strain QYMF) protein is Peptide deformylase.